A 119-amino-acid chain; its full sequence is MSIGKNVARLRRAKSTRLHIRKLGVPRLSVLRTGRHLYAQIFTADGSKVIAAANTLQSQVKGGLKNGKNSLAAIKVGKLIAERARAVGVDRIAFDRSGYLYHGRIKILADAARDAGLKF.

Belongs to the universal ribosomal protein uL18 family. Part of the 50S ribosomal subunit; part of the 5S rRNA/L5/L18/L25 subcomplex. Contacts the 5S and 23S rRNAs.

This is one of the proteins that bind and probably mediate the attachment of the 5S RNA into the large ribosomal subunit, where it forms part of the central protuberance. This Xylella fastidiosa (strain M23) protein is Large ribosomal subunit protein uL18.